The following is a 269-amino-acid chain: Surfeit locus protein 4 (269 aa).

5 helical membrane passes run 64–84 (LLASSFVFLNLLGQLTGCVLV), 92–112 (YACFGLFGIIALQTIAYSILW), 179–199 (FFSIVQNIVGTALMILVAIGF), 203–223 (LAALTLVVWLFAINVYFNAFW), and 239–259 (FFQTMSVIGGLLLVVALGPGG). Residues 266-269 (KKEW) carry the Di-lysine motif motif.

It belongs to the SURF4 family. As to quaternary structure, found in a complex composed at least of SURF4, TMED2 and TMED10. May interact with LMAN1. Interacts with ZFYVE27 and with KIF5A in a ZFYVE27-dependent manner. Interacts with STING1. Interacts with SAR1B. Interacts with TMEM41B.

It is found in the endoplasmic reticulum membrane. The protein localises to the endoplasmic reticulum-Golgi intermediate compartment membrane. It localises to the golgi apparatus membrane. In terms of biological role, endoplasmic reticulum cargo receptor that mediates the export of lipoproteins by recruiting cargos into COPII vesicles to facilitate their secretion. Acts as a cargo receptor for lipoproteins bearing both APOB and APOA1, thereby regulating lipoprotein delivery and the maintenance of lipid homeostasis. Synergizes with the GTPase SAR1B to mediate transport of circulating lipoproteins. Promotes the secretion of PCSK9. Also mediates the efficient secretion of erythropoietin (EPO). May also play a role in the maintenance of the architecture of the endoplasmic reticulum-Golgi intermediate compartment and of the Golgi. The polypeptide is Surfeit locus protein 4 (Homo sapiens (Human)).